A 495-amino-acid polypeptide reads, in one-letter code: Putative BTB/POZ domain-containing protein L98 (495 aa).

One can recognise a BTB domain in the interval 15–85 (SDLTIEFVDN…FYGIETTNDY (71 aa)).

This sequence belongs to the mimivirus BTB/WD family.

This chain is Putative BTB/POZ domain-containing protein L98, found in Acanthamoeba polyphaga (Amoeba).